The chain runs to 543 residues: Excitatory amino acid transporter 1 (543 aa).

Topologically, residues 1 to 47 (MTKSNGEEPRMGGRMERLQQGVRKRTLLAKKKVQSLTKEDVKSYLFR) are cytoplasmic. The chain crosses the membrane as a helical span at residues 48 to 68 (NAFVLLTVTAVIVGTILGFAL). At 69 to 86 (RPYKMSYREVKYFSFPGE) the chain is on the extracellular side. The chain crosses the membrane as a helical span at residues 87–108 (LLMRMLQMLVLPLIISSLVTGM). Residues 109–122 (AALDSKASGKMGMR) are Cytoplasmic-facing. The helical transmembrane segment at 123 to 145 (AVVYYMTTTIIAVVIGIIIVIII) threads the bilayer. Residues 146–236 (HPGKGTKENM…IREEMVPVPG (91 aa)) lie on the Extracellular side of the membrane. Residues Asn206 and Asn216 are each glycosylated (N-linked (GlcNAc...) asparagine). The helical transmembrane segment at 237–260 (SVNGVNALGLVVFSMCFGFVIGNM) threads the bilayer. Residues 261–269 (KEQGQALRE) lie on the Cytoplasmic side of the membrane. The helical transmembrane segment at 270–297 (FFDSLNEAIMRLVAVIMWYAPLGILFLI) threads the bilayer. Over 298–318 (AGKIVEMEDMGVIGGQLAMYT) the chain is Extracellular. A helical transmembrane segment spans residues 319–340 (VTVIVGLLIHAVIVLPLLYFLV). Residues 341–345 (TRKNP) are Cytoplasmic-facing. Residues 346–376 (WVFIGGLLQALITALGTSSSSATLPITFKCL) constitute an intramembrane region (discontinuously helical). L-aspartate is bound at residue 363–365 (SSS). The Cytoplasmic portion of the chain corresponds to 377-385 (EENNGVDKR). Residues 386–412 (ITRFVLPVGATINMDGTALYEALAAIF) traverse the membrane as a helical segment. Residues Gly394, Thr396, and Asn398 each coordinate Na(+). Thr402 contributes to the L-aspartate binding site. Residues 413 to 425 (IAQVNNFDLNFGQ) are Extracellular-facing. Residues 426 to 459 (IITISITATAASIGAAGIPQAGLVTMVIVLTSVG) constitute an intramembrane region (discontinuously helical). 443 to 447 (IPQAG) contacts L-aspartate. Residues 460–472 (LPTDDITLIIAVD) are Extracellular-facing. A helical transmembrane segment spans residues 473-494 (WFLDRLRTTTNVLGDSLGAGIV). Residues Asp476 and Asn483 each coordinate L-aspartate. 2 residues coordinate Na(+): Asn483 and Asp487. Over 495–543 (EHLSRHELKNRDVEMGNSVIEENEMKKPYQLIAQDNEPEKPVADSETKM) the chain is Cytoplasmic. The residue at position 512 (Ser512) is a Phosphoserine. Positions 522 to 543 (PYQLIAQDNEPEKPVADSETKM) are disordered. The segment covering 531 to 543 (EPEKPVADSETKM) has biased composition (basic and acidic residues).

The protein belongs to the dicarboxylate/amino acid:cation symporter (DAACS) (TC 2.A.23) family. SLC1A3 subfamily. In terms of assembly, homotrimer. Glycosylated. In terms of tissue distribution, detected in brain, in Bergmann glia arborising into the molecular layer of the cerebellum (at protein level). Localized in brain and is highly enriched in the Purkinje cell layer in cerebellum. Intermediate level in lung, low level in spleen, skeletal muscle and testis.

It is found in the cell membrane. It carries out the reaction K(+)(in) + L-glutamate(out) + 3 Na(+)(out) + H(+)(out) = K(+)(out) + L-glutamate(in) + 3 Na(+)(in) + H(+)(in). The catalysed reaction is K(+)(in) + L-aspartate(out) + 3 Na(+)(out) + H(+)(out) = K(+)(out) + L-aspartate(in) + 3 Na(+)(in) + H(+)(in). The enzyme catalyses D-aspartate(out) + K(+)(in) + 3 Na(+)(out) + H(+)(out) = D-aspartate(in) + K(+)(out) + 3 Na(+)(in) + H(+)(in). Functionally, sodium-dependent, high-affinity amino acid transporter that mediates the uptake of L-glutamate and also L-aspartate and D-aspartate. Functions as a symporter that transports one amino acid molecule together with two or three Na(+) ions and one proton, in parallel with the counter-transport of one K(+) ion. Plays a redundant role in the rapid removal of released glutamate from the synaptic cleft, which is essential for terminating the postsynaptic action of glutamate. The chain is Excitatory amino acid transporter 1 (Slc1a3) from Mus musculus (Mouse).